We begin with the raw amino-acid sequence, 392 residues long: Dihydroorotate dehydrogenase (quinone) (392 aa).

Residues 90–94 (AGFDK) and T114 contribute to the FMN site. K94 provides a ligand contact to substrate. 139-143 (NRMGF) contributes to the substrate binding site. FMN-binding residues include N173 and N206. A substrate-binding site is contributed by N206. S209 acts as the Nucleophile in catalysis. Residue N211 participates in substrate binding. FMN is bound by residues K243 and V271. Substrate is bound at residue 272–273 (NT). FMN-binding positions include G301, G330, and 351-352 (YT).

This sequence belongs to the dihydroorotate dehydrogenase family. Type 2 subfamily. In terms of assembly, monomer. FMN serves as cofactor.

The protein localises to the cell membrane. It carries out the reaction (S)-dihydroorotate + a quinone = orotate + a quinol. The protein operates within pyrimidine metabolism; UMP biosynthesis via de novo pathway; orotate from (S)-dihydroorotate (quinone route): step 1/1. Functionally, catalyzes the conversion of dihydroorotate to orotate with quinone as electron acceptor. The protein is Dihydroorotate dehydrogenase (quinone) of Prochlorococcus marinus (strain MIT 9313).